Reading from the N-terminus, the 510-residue chain is Protein disulfide-isomerase (510 aa).

Residues 1-19 form the signal peptide; that stretch reads MLRRALLCLAVAAAPGLYA. The region spanning 20–136 is the Thioredoxin 1 domain; it reads DAPEEEDHVL…IVNWLKKRTG (117 aa). Active-site nucleophile residues include Cys55 and Cys58. Cys55 and Cys58 are disulfide-bonded. Residue Lys202 is modified to N6-acetyllysine. 2 positions are modified to N6-succinyllysine: Lys224 and Lys273. Ser333 and Ser359 each carry phosphoserine. A Thioredoxin 2 domain is found at 351-477; sequence GKIKPHLMSQ…FKKFLESGGQ (127 aa). Active-site nucleophile residues include Cys399 and Cys402. The cysteines at positions 399 and 402 are disulfide-linked. Ser429 bears the Phosphoserine mark. The segment at 473 to 510 is disordered; sequence ESGGQDGAGDDDDLEDLEEAEEPDMEEDDDQKAVKDEL. A compositionally biased stretch (acidic residues) spans 480–502; that stretch reads AGDDDDLEDLEEAEEPDMEEDDD. Residues 507–510 carry the Prevents secretion from ER motif; the sequence is KDEL.

This sequence belongs to the protein disulfide isomerase family. As to quaternary structure, heterodimer; heterodimerizes with the protein microsomal triglyceride transfer MTTP. Homodimer. Homodimer. Monomers and homotetramers may also occur. Interacts with P4HA2, forming a heterotetramer consisting of 2 alpha subunits (P4HA2) and 2 beta (P4HB), where P4HB plays the role of a structural subunit; this tetramer catalyzes the formation of 4-hydroxyproline in collagen. Also constitutes the structural subunit of the microsomal triacylglycerol transfer protein MTTP in mammalian cells. Stabilizes both enzymes and retain them in the ER without contributing to the catalytic activity. Binds UBQLN1. Interacts with ERO1B. Interacts with ILDR2. Interacts with ERN1/IRE1A (via N-terminus); the interaction is enhanced by phosphorylation of P4HB by FAM20C in response to endoplasmic reticulum stress and results in attenuation of ERN1 activity. Phosphorylation of Ser-359 by FAM20C is induced by endoplasmic reticulum stress and results in a functional switch from oxidoreductase to molecular chaperone. It also promotes interaction with ERN1.

It localises to the endoplasmic reticulum. Its subcellular location is the endoplasmic reticulum lumen. The protein localises to the melanosome. It is found in the cell membrane. The enzyme catalyses Catalyzes the rearrangement of -S-S- bonds in proteins.. In terms of biological role, this multifunctional protein catalyzes the formation, breakage and rearrangement of disulfide bonds. At the cell surface, seems to act as a reductase that cleaves disulfide bonds of proteins attached to the cell. May therefore cause structural modifications of exofacial proteins. Inside the cell, seems to form/rearrange disulfide bonds of nascent proteins. At high concentrations and following phosphorylation by FAM20C, functions as a chaperone that inhibits aggregation of misfolded proteins. At low concentrations, facilitates aggregation (anti-chaperone activity). May be involved with other chaperones in the structural modification of the TG precursor in hormone biogenesis. Also acts as a structural subunit of various enzymes such as prolyl 4-hydroxylase and microsomal triacylglycerol transfer protein MTTP. Receptor for LGALS9; the interaction retains P4HB at the cell surface of Th2 T helper cells, increasing disulfide reductase activity at the plasma membrane, altering the plasma membrane redox state and enhancing cell migration. The chain is Protein disulfide-isomerase (P4HB) from Macaca fuscata fuscata (Japanese macaque).